The chain runs to 34 residues: Leader peptide SpeFL (34 aa).

Residues 10–16 carry the Ornithine recognition loop motif; the sequence is HIRRTTH. Residue arginine 13 coordinates L-ornithine.

This sequence belongs to the speF operon leader peptide family. In terms of assembly, binds ornithine in stalled 70S ribosomes, blocking the upper two-thirds of the exit tunnel. Contacts 23S rRNA and ribosomal proteins L4 and L22.

Functionally, a small protein (arrest peptide) encoded upstream of inducible ornithine carboxylase gene (speF) that controls expression of downstream genes (speF and potE) by transcriptional and translational attenuation. Its expression controls transcription and translation of downstream SpeF; translation pausing at low Arg levels on this mRNA prevents premature Rho-dependent transcription termination of speF and also enhances SprF translation by preventing sequestration of its ribosome-binding site. In the presence of high Arg levels translation of this protein allows the formation of an speF mRNA structure that is degraded by RNase G. The chain is Leader peptide SpeFL from Salmonella typhimurium (strain SL1344).